A 103-amino-acid chain; its full sequence is Large ribosomal subunit protein bL21 (103 aa).

The protein belongs to the bacterial ribosomal protein bL21 family. As to quaternary structure, part of the 50S ribosomal subunit. Contacts protein L20.

Functionally, this protein binds to 23S rRNA in the presence of protein L20. In Pasteurella multocida (strain Pm70), this protein is Large ribosomal subunit protein bL21.